The chain runs to 432 residues: Guanine nucleotide-binding protein subunit alpha (432 aa).

Positions 1–97 (MGGCMSTPEA…SKGNKDRSNQ (97 aa)) are disordered. G2 carries N-myristoyl glycine lipidation. C4 carries S-palmitoyl cysteine lipidation. Low complexity predominate over residues 21 to 52 (PSTSTSSRPPQASTSATATAAGAGTSAANGTA). A G-alpha domain is found at 111 to 432 (KECKILLLGS…QNALRDSGIL (322 aa)). The interval 114–127 (KILLLGSGESGKST) is G1 motif. Residues E122, S123, G124, K125, S126, T127, D230, L255, T261, G283, N349, K350, D352, and A404 each coordinate GTP. Position 126 (S126) interacts with Mg(2+). Residues 253–261 (DVLRARTKT) are G2 motif. T261 contributes to the Mg(2+) binding site. The interval 276–285 (IHMFDVGGQR) is G3 motif. The tract at residues 345–352 (ILFLNKID) is G4 motif. Residues 402–407 (TQATDT) form a G5 motif region.

It belongs to the G-alpha family. In terms of assembly, g proteins are composed of 3 units; alpha, beta and gamma. The alpha chain contains the guanine nucleotide binding site. It depends on Mg(2+) as a cofactor.

Its function is as follows. Guanine nucleotide-binding proteins (G proteins) are involved as modulators or transducers in various transmembrane signaling systems. Involved in the mating pathway. This chain is Guanine nucleotide-binding protein subunit alpha (GPA1), found in Cryptococcus neoformans var. neoformans serotype D (strain B-3501A) (Filobasidiella neoformans).